The chain runs to 227 residues: 7-cyano-7-deazaguanine synthase (227 aa).

16 to 26 lines the ATP pocket; sequence FSGGQDSTTCL. 4 residues coordinate Zn(2+): C194, C202, C205, and C208.

Belongs to the QueC family. It depends on Zn(2+) as a cofactor.

The enzyme catalyses 7-carboxy-7-deazaguanine + NH4(+) + ATP = 7-cyano-7-deazaguanine + ADP + phosphate + H2O + H(+). The protein operates within purine metabolism; 7-cyano-7-deazaguanine biosynthesis. Functionally, catalyzes the ATP-dependent conversion of 7-carboxy-7-deazaguanine (CDG) to 7-cyano-7-deazaguanine (preQ(0)). The chain is 7-cyano-7-deazaguanine synthase from Haemophilus influenzae (strain PittEE).